A 171-amino-acid chain; its full sequence is Small ribosomal subunit protein uS4 (171 aa).

Residues 101 to 165 (RRLQTVVYRK…SSLSDELHPE (65 aa)) enclose the S4 RNA-binding domain. The tract at residues 148–171 (SSVGFDEHSSLSDELHPERAEAQE) is disordered. Residues 152–171 (FDEHSSLSDELHPERAEAQE) are compositionally biased toward basic and acidic residues.

The protein belongs to the universal ribosomal protein uS4 family. In terms of assembly, part of the 30S ribosomal subunit. Contacts protein S5. The interaction surface between S4 and S5 is involved in control of translational fidelity.

Its function is as follows. One of the primary rRNA binding proteins, it binds directly to 16S rRNA where it nucleates assembly of the body of the 30S subunit. In terms of biological role, with S5 and S12 plays an important role in translational accuracy. In Haloarcula marismortui (strain ATCC 43049 / DSM 3752 / JCM 8966 / VKM B-1809) (Halobacterium marismortui), this protein is Small ribosomal subunit protein uS4.